The chain runs to 417 residues: Serine hydroxymethyltransferase 2 (417 aa).

(6S)-5,6,7,8-tetrahydrofolate contacts are provided by residues L121 and 125–127 (GHL). N6-(pyridoxal phosphate)lysine is present on K230. (6S)-5,6,7,8-tetrahydrofolate is bound at residue 355-357 (SPF).

This sequence belongs to the SHMT family. As to quaternary structure, homodimer. It depends on pyridoxal 5'-phosphate as a cofactor.

It localises to the cytoplasm. The catalysed reaction is (6R)-5,10-methylene-5,6,7,8-tetrahydrofolate + glycine + H2O = (6S)-5,6,7,8-tetrahydrofolate + L-serine. Its pathway is one-carbon metabolism; tetrahydrofolate interconversion. It participates in amino-acid biosynthesis; glycine biosynthesis; glycine from L-serine: step 1/1. Functionally, catalyzes the reversible interconversion of serine and glycine with tetrahydrofolate (THF) serving as the one-carbon carrier. This reaction serves as the major source of one-carbon groups required for the biosynthesis of purines, thymidylate, methionine, and other important biomolecules. Also exhibits THF-independent aldolase activity toward beta-hydroxyamino acids, producing glycine and aldehydes, via a retro-aldol mechanism. In Pseudomonas fluorescens (strain ATCC BAA-477 / NRRL B-23932 / Pf-5), this protein is Serine hydroxymethyltransferase 2.